A 250-amino-acid chain; its full sequence is Imidazole glycerol phosphate synthase subunit HisF (250 aa).

Residues D11 and D130 contribute to the active site.

It belongs to the HisA/HisF family. In terms of assembly, heterodimer of HisH and HisF.

It localises to the cytoplasm. It carries out the reaction 5-[(5-phospho-1-deoxy-D-ribulos-1-ylimino)methylamino]-1-(5-phospho-beta-D-ribosyl)imidazole-4-carboxamide + L-glutamine = D-erythro-1-(imidazol-4-yl)glycerol 3-phosphate + 5-amino-1-(5-phospho-beta-D-ribosyl)imidazole-4-carboxamide + L-glutamate + H(+). It functions in the pathway amino-acid biosynthesis; L-histidine biosynthesis; L-histidine from 5-phospho-alpha-D-ribose 1-diphosphate: step 5/9. In terms of biological role, IGPS catalyzes the conversion of PRFAR and glutamine to IGP, AICAR and glutamate. The HisF subunit catalyzes the cyclization activity that produces IGP and AICAR from PRFAR using the ammonia provided by the HisH subunit. The sequence is that of Imidazole glycerol phosphate synthase subunit HisF from Bacteroides fragilis (strain ATCC 25285 / DSM 2151 / CCUG 4856 / JCM 11019 / LMG 10263 / NCTC 9343 / Onslow / VPI 2553 / EN-2).